Here is a 442-residue protein sequence, read N- to C-terminus: Kelch domain-containing protein 10 (442 aa).

A disordered region spans residues 1–58 (MSAAQGWDRNRRRGGGAAGGGGGGSGAGGGSGGNGGRGTGQLNRFVQLSGRPHLPGKK). At Arg-13 the chain carries Omega-N-methylarginine. Positions 15–39 (GGAAGGGGGGSGAGGGSGGNGGRGT) are enriched in gly residues. Kelch repeat units follow at residues 87–154 (RPPP…PREL), 155–198 (ASMS…ALLS), 199–260 (CRGK…PEER), 261–319 (YRHE…RRCH), 320–364 (SCVQ…PEPV), and 365–403 (YFHC…LVVP). The interaction with CUL2 stretch occupies residues 401–442 (VVPSLLELAWEKLLAAFPNLANLSRTQLLHLGLTQGLIERLK).

This sequence belongs to the KLHDC10 family. Component of a CRL2 E3 ubiquitin-protein ligase complex, also named ECS (Elongin BC-CUL2/5-SOCS-box protein) complex, composed of CUL2, Elongin BC (ELOB and ELOC), RBX1 and substrate-specific adapter KLHDC10. Interacts (via the 6 Kelch repeats) with PPP5C.

The protein resides in the nucleus. The protein localises to the cytoplasm. It functions in the pathway protein modification; protein ubiquitination. In terms of biological role, substrate-recognition component of a Cul2-RING (CRL2) E3 ubiquitin-protein ligase complex of the DesCEND (destruction via C-end degrons) pathway, which recognizes a C-degron located at the extreme C-terminus of target proteins, leading to their ubiquitination and degradation. The C-degron recognized by the DesCEND pathway is usually a motif of less than ten residues and can be present in full-length proteins, truncated proteins or proteolytically cleaved forms. The CRL2(KLHDC10) complex specifically recognizes proteins with a proline-glycine (Pro-Gly) or an alanine tail (CAT tail) at the C-terminus, leading to their ubiquitination and degradation. The CRL2(KLHDC10) complex is involved in the ribosome-associated quality control (RQC) pathway, which mediates the extraction of incompletely synthesized nascent chains from stalled ribosomes: CRL2(KLHDC10) acts downstream of NEMF and recognizes CAT tails associated with stalled nascent chains, leading to their ubiquitination and degradation. Participates in the oxidative stress-induced cell death through MAP3K5 activation. Inhibits PPP5C phosphatase activity on MAP3K5. Acts as a regulator of necroptosis. This chain is Kelch domain-containing protein 10 (KLHDC10), found in Bos taurus (Bovine).